The sequence spans 367 residues: snRNA-activating protein complex subunit 1 (367 aa).

The tract at residues 1–168 (MGTPPGLQTD…EEFKDPSDRV (168 aa)) is SNAPC3-binding. The SNAPC4-binding stretch occupies residues 164-268 (PSDRVMKLIT…AESLAKIKSK (105 aa)). Disordered stretches follow at residues 228 to 254 (KDRKNPSLKSKINDGEEKMEGNSQETE) and 278 to 367 (KSRR…KRKH). Positions 238-254 (KINDGEEKMEGNSQETE) are enriched in basic and acidic residues. Phosphoserine occurs at positions 289 and 290. Positions 292-301 (CDSASGQGQV) are enriched in polar residues.

In terms of assembly, part of the SNAPc complex composed of 5 subunits: SNAPC1, SNAPC2, SNAPC3, SNAPC4 and SNAPC5. SNAPC1 interacts with SNAPC3, SNAPC4 and TBP.

It localises to the nucleus. Functionally, part of the SNAPc complex required for the transcription of both RNA polymerase II and III small-nuclear RNA genes. Binds to the proximal sequence element (PSE), a non-TATA-box basal promoter element common to these 2 types of genes. Recruits TBP and BRF2 to the U6 snRNA TATA box. The polypeptide is snRNA-activating protein complex subunit 1 (SNAPC1) (Macaca fascicularis (Crab-eating macaque)).